A 485-amino-acid chain; its full sequence is Noelin (485 aa).

A signal peptide spans Met1–Gln24. N-linked (GlcNAc...) asparagine glycosylation is found at Asn33, Asn103, Asn187, Asn288, Asn307, Asn394, Asn431, and Asn473. Residues Arg87 to Leu225 adopt a coiled-coil conformation. In terms of domain architecture, Olfactomedin-like spans Ala226 to His478. A disulfide bridge connects residues Cys227 and Cys409.

In terms of assembly, homotetramer; disulfide-linked. Dimer of dimers, giving rise to a V-shaped homotretramer. Isoform 1 and isoform 3 interact with RTN4R. Identified in a complex with RTN4R and LINGO1. Peripherally associated with AMPAR complex. AMPAR complex consists of an inner core made of 4 pore-forming GluA/GRIA proteins (GRIA1, GRIA2, GRIA3 and GRIA4) and 4 major auxiliary subunits arranged in a twofold symmetry. One of the two pairs of distinct binding sites is occupied either by CNIH2, CNIH3 or CACNG2, CACNG3. The other harbors CACNG2, CACNG3, CACNG4, CACNG8 or GSG1L. This inner core of AMPAR complex is complemented by outer core constituents binding directly to the GluA/GRIA proteins at sites distinct from the interaction sites of the inner core constituents. Outer core constituents include at least PRRT1, PRRT2, CKAMP44/SHISA9, FRRS1L and NRN1. The proteins of the inner and outer core serve as a platform for other, more peripherally associated AMPAR constituents, including OLFM1. Alone or in combination, these auxiliary subunits control the gating and pharmacology of the AMPAR complex and profoundly impact their biogenesis and protein processing. Interacts with OLFM2. Post-translationally, in isoform 3 and isoform 4, the signal peptide is predicted to end in position 17. In terms of tissue distribution, expressed in the brain (at protein level). Expressed in the brain, predominantly in the cortex and hippocampus. In the pituitary only the two A-type and in the adrenal glands only the two B-type forms were detected.

Its subcellular location is the secreted. The protein localises to the synapse. It localises to the endoplasmic reticulum. It is found in the cell projection. The protein resides in the axon. Its subcellular location is the perikaryon. In terms of biological role, contributes to the regulation of axonal growth in the embryonic and adult central nervous system by inhibiting interactions between RTN4R and LINGO1. Inhibits RTN4R-mediated axon growth cone collapse. May play an important role in regulating the production of neural crest cells by the neural tube. May be required for normal responses to olfactory stimuli. The chain is Noelin (Olfm1) from Rattus norvegicus (Rat).